Consider the following 295-residue polypeptide: 2-methylisocitrate lyase (295 aa).

Position 45–47 (45–47 (SGG)) interacts with substrate. The Mg(2+) site is built by Asp85 and Asp87. Substrate is bound by residues 123–124 (CG), Arg158, Glu188, 210–212 (NIT), Arg241, and Arg270.

The protein belongs to the isocitrate lyase/PEP mutase superfamily. Methylisocitrate lyase family. In terms of assembly, homotetramer; dimer of dimers. The cofactor is Mg(2+).

The catalysed reaction is (2S,3R)-3-hydroxybutane-1,2,3-tricarboxylate = pyruvate + succinate. It participates in organic acid metabolism; propanoate degradation. Involved in the catabolism of short chain fatty acids (SCFA) via the 2-methylcitrate cycle I (propionate degradation route). Catalyzes the thermodynamically favored C-C bond cleavage of (2R,3S)-2-methylisocitrate to yield pyruvate and succinate via an alpha-carboxy-carbanion intermediate. This Salmonella typhimurium (strain LT2 / SGSC1412 / ATCC 700720) protein is 2-methylisocitrate lyase.